A 255-amino-acid chain; its full sequence is Small ribosomal subunit protein uS2 (255 aa).

This sequence belongs to the universal ribosomal protein uS2 family.

This chain is Small ribosomal subunit protein uS2, found in Geotalea daltonii (strain DSM 22248 / JCM 15807 / FRC-32) (Geobacter daltonii).